Consider the following 73-residue polypeptide: Sec-independent protein translocase protein TatA (73 aa).

A helical transmembrane segment spans residues 1–21 (MFGLGAPELILILILALIIFG). A disordered region spans residues 52-73 (EAAKIDDGNNNSDKEKATRQAS).

The protein belongs to the TatA/E family. Forms a complex with TatC.

The protein resides in the cell membrane. Its function is as follows. Part of the twin-arginine translocation (Tat) system that transports large folded proteins containing a characteristic twin-arginine motif in their signal peptide across membranes. TatA could form the protein-conducting channel of the Tat system. The chain is Sec-independent protein translocase protein TatA from Moorella thermoacetica (strain ATCC 39073 / JCM 9320).